Consider the following 270-residue polypeptide: Maximins-S type D (270 aa).

An N-terminal signal peptide occupies residues 1-18; it reads MNFNYFILVLFFITSGHA. Propeptides lie at residues 19 to 35 and 52 to 65; these read KSET…HIKR and SAEE…LVTR. An Asparagine amide modification is found at N83. Positions 87–100 are excised as a propeptide; it reads SAEEQDLAEDLVTR. K118 is subject to Lysine amide. Residues 122-135 constitute a propeptide that is removed on maturation; it reads SAEDQDLAEDLVTR. N153 is modified (asparagine amide). The propeptide occupies 157–170; sequence SAEEQDLAEHLVTR. N188 is modified (asparagine amide). Residues 192 to 205 constitute a propeptide that is removed on maturation; it reads SAEEQDLVEDLVTR. Lysine amide is present on K223. A propeptide spanning residues 227-240 is cleaved from the precursor; the sequence is SAEEQDLAEDLVTR. The residue at position 258 (K258) is a Lysine amide. Positions 262-270 are excised as a propeptide; sequence SAEQEKDMK.

It belongs to the maximin-S family. As to expression, expressed by the skin dorsal glands.

It localises to the secreted. Its function is as follows. Maximin-S1 has no antimicrobial activity. Has no hemolytic activity. In terms of biological role, maximin-S2 has an activity against mycoplasma but has no activity against common Gram-positive and Gram-negative bacteria nor fungi. Has no hemolytic activity. Functionally, maximin-S3 has an activity against mycoplasma but has no activity against common Gram-positive and Gram-negative bacteria nor fungi. Has no hemolytic activity. Maximin-S4 has an activity against mycoplasma but has no activity against common Gram-positive and Gram-negative bacteria nor fungi. Has no hemolytic activity. Its function is as follows. Maximin-S5 has an activity against mycoplasma but has no activity against common Gram-positive and Gram-negative bacteria nor fungi. Has no hemolytic activity. The sequence is that of Maximins-S type D from Bombina maxima (Giant fire-bellied toad).